A 1016-amino-acid polypeptide reads, in one-letter code: FHIP family protein Bm1_18400 (1016 aa).

2 disordered regions span residues 586 to 608 and 757 to 778; these read DSLR…RSSF and SDGF…PLGK.

The protein belongs to the FHIP family.

The chain is FHIP family protein Bm1_18400 from Brugia malayi (Filarial nematode worm).